Consider the following 114-residue polypeptide: Large ribosomal subunit protein uL22 (114 aa).

It belongs to the universal ribosomal protein uL22 family. As to quaternary structure, part of the 50S ribosomal subunit.

Its function is as follows. This protein binds specifically to 23S rRNA; its binding is stimulated by other ribosomal proteins, e.g. L4, L17, and L20. It is important during the early stages of 50S assembly. It makes multiple contacts with different domains of the 23S rRNA in the assembled 50S subunit and ribosome. Functionally, the globular domain of the protein is located near the polypeptide exit tunnel on the outside of the subunit, while an extended beta-hairpin is found that lines the wall of the exit tunnel in the center of the 70S ribosome. This is Large ribosomal subunit protein uL22 from Aeromonas hydrophila subsp. hydrophila (strain ATCC 7966 / DSM 30187 / BCRC 13018 / CCUG 14551 / JCM 1027 / KCTC 2358 / NCIMB 9240 / NCTC 8049).